The sequence spans 772 residues: Endoplasmic reticulum membrane sensor NFE2L1 (772 aa).

The chain crosses the membrane as a helical; Signal-anchor for type II membrane protein span at residues 7 to 24; sequence YLTEGLLQFTILLSLIGV. The tract at residues 108 to 148 is disordered; sequence DPEGSVSGSQPNSGLALESSSGLQDVTGPDNGVRESETEQG. A compositionally biased stretch (polar residues) spans 113-131; that stretch reads VSGSQPNSGLALESSSGLQ. The tract at residues 191–199 is cholesterol recognition/amino acid consensus (CRAC) region; sequence VFDYSHRQK. N-linked (GlcNAc...) asparagine glycosylation is present at Asn348. Residues 379-383 are CPD; it reads SPEVE. N-linked (GlcNAc...) asparagine glycans are attached at residues Asn412 and Asn423. The tract at residues 470–532 is disordered; it reads EEEFDSDSGL…AVGYSSDSET (63 aa). Residues 476–480 carry the Destruction motif motif; the sequence is DSGLS. The segment covering 476-523 has biased composition (low complexity); it reads DSGLSLDSSHSPSSLSSSEGSSSSSSSSSSSSSSASSSASSSFSEEGA. Ser528 is modified (phosphoserine; by CK2). Ser599 is modified (phosphoserine; by PKA). The 64-residue stretch at 654–717 folds into the bZIP domain; the sequence is LIRDIRRRGK…RQMKQKVQSL (64 aa). Residues 656 to 675 are basic motif; sequence RDIRRRGKNKMAAQNCRKRK. The tract at residues 682 to 696 is leucine-zipper; that stretch reads LERDVEDLQRDKARL. A disordered region spans residues 753–772; the sequence is RTMADQQARRQERKPKDRRK. Positions 761–768 match the Nuclear localization signal motif; the sequence is RRQERKPK. Residues 763-772 are compositionally biased toward basic residues; the sequence is QERKPKDRRK.

It belongs to the bZIP family. CNC subfamily. Interacts with KEAP1. As to quaternary structure, interacts (via CPD region) with FBXW7; leading to its ubiquitination and degradation. Interacts with SYVN1/HRD1; leading to its ubiquitination and degradation. Interacts (when ubiquitinated) with DDI2; leading to its cleavage. In terms of assembly, interacts (via the bZIP domain) with small MAF protein (MAFF, MAFG or MAFK); required for binding to antioxidant response elements (AREs) on DNA. Interacts (via Destruction motif) with BTRC; leading to its ubiquitination and degradation. Interacts with CEBPB; the heterodimer represses expression of DSPP during odontoblast differentiation. Interacts with MOTS-c, a peptide produced by the mitochondrially encoded 12S rRNA MT-RNR1. In terms of processing, cleaved at Leu-104 by the aspartyl protease DDI2 following retrotranslocation, releasing the protein from the endoplasmic reticulum membrane and forming the transcription factor NRF1 that translocates into the nucleus. Ubiquitination is prerequisite for cleavage by aspartyl protease DDI2. N-glycosylated in normal conditions, when it has a single-pass type II membrane protein topology, with the DNA-binding domain facing the endoplasmic reticulum lumen. Deglycosylated during retrotranslocation to the cytosolic side of the membrane, to have a single-pass type III membrane protein topology with the major part of the protein facing the cytosol. Post-translationally, ubiquitinated by the SCF(FBXW7) complex and SYVN1/HRD1, leading to its degradation by the proteasome. Ubiquitinated during retrotranslocation to the cytosolic side of the membrane: ubiquitination does not lead to degradation and is required for processing by the aspartyl protease DDI2 and subsequent release from the endoplasmic reticulum membrane. In terms of processing, phosphorylation by CK2 at Ser-528 inhibits transcription factor activity, possibly by affecting DNA-binding activity. Phosphorylation at Ser-599 is required for interaction with CEBPB. Ubiquitinated by the SCF(BTRC) complex in the nucleus, leading to its degradation by the proteasome.

The protein resides in the endoplasmic reticulum membrane. It is found in the nucleus. Endoplasmic reticulum membrane sensor that translocates into the nucleus in response to various stresses to act as a transcription factor. Constitutes a precursor of the transcription factor NRF1. Able to detect various cellular stresses, such as cholesterol excess, oxidative stress or proteasome inhibition. In response to stress, it is released from the endoplasmic reticulum membrane following cleavage by the protease DDI2 and translocates into the nucleus to form the transcription factor NRF1. Acts as a key sensor of cholesterol excess: in excess cholesterol conditions, the endoplasmic reticulum membrane form of the protein directly binds cholesterol via its CRAC motif, preventing cleavage and release of the transcription factor NRF1, thereby allowing expression of genes promoting cholesterol removal, such as CD36. Involved in proteasome homeostasis: in response to proteasome inhibition, it is released from the endoplasmic reticulum membrane, translocates to the nucleus and activates expression of genes encoding proteasome subunits. In terms of biological role, CNC-type bZIP family transcription factor that translocates to the nucleus and regulates expression of target genes in response to various stresses. Heterodimerizes with small-Maf proteins (MAFF, MAFG or MAFK) and binds DNA motifs including the antioxidant response elements (AREs), which regulate expression of genes involved in oxidative stress response. Activates or represses expression of target genes, depending on the context. Plays a key role in cholesterol homeostasis by acting as a sensor of cholesterol excess: in low cholesterol conditions, translocates into the nucleus and represses expression of genes involved in defense against cholesterol excess, such as CD36. In excess cholesterol conditions, the endoplasmic reticulum membrane form of the protein directly binds cholesterol via its CRAC motif, preventing cleavage and release of the transcription factor NRF1, thereby allowing expression of genes promoting cholesterol removal. Critical for redox balance in response to oxidative stress: acts by binding the AREs motifs on promoters and mediating activation of oxidative stress response genes, such as GCLC, GCLM, GSS, MT1 and MT2. Plays an essential role during fetal liver hematopoiesis: probably has a protective function against oxidative stress and is involved in lipid homeostasis in the liver. Involved in proteasome homeostasis: in response to proteasome inhibition, mediates the 'bounce-back' of proteasome subunits by translocating into the nucleus and activating expression of genes encoding proteasome subunits. Also involved in regulating glucose flux. Together with CEBPB; represses expression of DSPP during odontoblast differentiation. In response to ascorbic acid induction, activates expression of SP7/Osterix in osteoblasts. This Pongo abelii (Sumatran orangutan) protein is Endoplasmic reticulum membrane sensor NFE2L1.